We begin with the raw amino-acid sequence, 181 residues long: Large ribosomal subunit protein uL22 (181 aa).

The segment at 157–181 is disordered; the sequence is PEAAKKPGKKTSAVEKSKKATAATH.

This sequence belongs to the universal ribosomal protein uL22 family.

In Biphyllus lunatus (Beetle), this protein is Large ribosomal subunit protein uL22 (RpL17).